The primary structure comprises 300 residues: Acetylglutamate kinase (300 aa).

Residues 67–68 (GG), R89, and N194 contribute to the substrate site.

This sequence belongs to the acetylglutamate kinase family. ArgB subfamily.

It is found in the cytoplasm. The catalysed reaction is N-acetyl-L-glutamate + ATP = N-acetyl-L-glutamyl 5-phosphate + ADP. Its pathway is amino-acid biosynthesis; L-arginine biosynthesis; N(2)-acetyl-L-ornithine from L-glutamate: step 2/4. Its function is as follows. Catalyzes the ATP-dependent phosphorylation of N-acetyl-L-glutamate. The chain is Acetylglutamate kinase from Saccharophagus degradans (strain 2-40 / ATCC 43961 / DSM 17024).